The sequence spans 96 residues: Small ribosomal subunit protein bS18 (96 aa).

The span at 1-18 (MPPPRGKGRFGKDKRPKR) shows a compositional bias: basic residues. The segment at 1 to 21 (MPPPRGKGRFGKDKRPKRNTQ) is disordered.

The protein belongs to the bacterial ribosomal protein bS18 family. In terms of assembly, part of the 30S ribosomal subunit. Forms a tight heterodimer with protein bS6.

Binds as a heterodimer with protein bS6 to the central domain of the 16S rRNA, where it helps stabilize the platform of the 30S subunit. The polypeptide is Small ribosomal subunit protein bS18 (Methylibium petroleiphilum (strain ATCC BAA-1232 / LMG 22953 / PM1)).